Reading from the N-terminus, the 102-residue chain is MYAIIKTGGKQLKVEAGQTIYVEKLDAKEGDKVTFDKVVFVGGDKTVIGTPFVEGATVEATVEKQGRAKKVVTFKYKPKKHQHTKQGHRQPYTKVVIDAINA.

This sequence belongs to the bacterial ribosomal protein bL21 family. As to quaternary structure, part of the 50S ribosomal subunit. Contacts protein L20.

In terms of biological role, this protein binds to 23S rRNA in the presence of protein L20. This is Large ribosomal subunit protein bL21 from Ligilactobacillus salivarius (strain UCC118) (Lactobacillus salivarius).